A 321-amino-acid polypeptide reads, in one-letter code: Nucleotide-binding protein LI0459 (321 aa).

41-48 serves as a coordination point for ATP; it reads GMSGAGKS.

It belongs to the RapZ-like family.

In terms of biological role, displays ATPase and GTPase activities. The sequence is that of Nucleotide-binding protein LI0459 from Lawsonia intracellularis (strain PHE/MN1-00).